A 2620-amino-acid polypeptide reads, in one-letter code: Ubiquitin carboxyl-terminal hydrolase 24 (2620 aa).

Positions 3–44 constitute a UBA domain; sequence SEEEQHMTTLLCMGFSDPATIRKALRLAKNDINEAVALLTNE. The tract at residues 45–102 is disordered; that stretch reads RPGLDYGGYEPMDSGGGPSPGPGGGPRGDGGGDGGGGGPSRGGSTGGGGGFDPPPAYH. The span at 58–95 shows a compositional bias: gly residues; it reads SGGGPSPGPGGGPRGDGGGDGGGGGPSRGGSTGGGGGF. 2 positions are modified to phosphoserine: Ser-63 and Ser-88. A Phosphotyrosine modification is found at Tyr-942. Disordered regions lie at residues 1034-1054 and 1129-1151; these read TSGS…SSSS and TLLS…QQHQ. Low complexity predominate over residues 1131 to 1151; that stretch reads LSESSSQSSKSPSLSSKQQHQ. 2 positions are modified to phosphoserine: Ser-1141 and Ser-1285. A USP domain is found at 1689 to 2042; the sequence is VGLRNGGATC…NAYMLFYQRV (354 aa). Cys-1698 acts as the Nucleophile in catalysis. The interval 1921–1945 is disordered; the sequence is ARQDSSSEVGENGRSVDQGGGGSPR. Ser-1943 carries the post-translational modification Phosphoserine. His-1970 (proton acceptor) is an active-site residue. 3 positions are modified to phosphoserine: Ser-2047, Ser-2077, and Ser-2561. Residues 2063-2090 are disordered; it reads AEDLSLSAPSSPEISPQSSPRPHRPNND. The segment covering 2069–2082 has biased composition (low complexity); it reads SAPSSPEISPQSSP. Thr-2565 bears the Phosphothreonine mark. The tract at residues 2575–2620 is disordered; it reads EKEQSGSSNGSESSPANENGDRHLQQGSESPMMIGELRSDLDDVDP. The segment covering 2579–2592 has biased composition (low complexity); that stretch reads SGSSNGSESSPANE. Position 2604 is a phosphoserine (Ser-2604). The segment covering 2611 to 2620 has biased composition (basic and acidic residues); that stretch reads LRSDLDDVDP.

The protein belongs to the peptidase C19 family. In terms of assembly, (Microbial infection) Interacts with human cytomegalovirus protein UL38.

It catalyses the reaction Thiol-dependent hydrolysis of ester, thioester, amide, peptide and isopeptide bonds formed by the C-terminal Gly of ubiquitin (a 76-residue protein attached to proteins as an intracellular targeting signal).. Ubiquitin-specific protease that regulates cell survival in various contexts through modulating the protein stability of some of its substrates including DDB2, MCL1 or TP53. Plays a positive role on ferritinophagy where ferritin is degraded in lysosomes and releases free iron. The protein is Ubiquitin carboxyl-terminal hydrolase 24 (USP24) of Homo sapiens (Human).